Reading from the N-terminus, the 92-residue chain is Progonadoliberin-1 (92 aa).

The signal sequence occupies residues 1 to 23 (MGLIPKLLAGLVLLTLCVENGSG). Q24 is subject to Pyrrolidone carboxylic acid. G33 is subject to Glycine amide.

The protein belongs to the GnRH family. Post-translationally, the precursor is cleaved by ACE, which removes the Gly-Lys-Arg peptide at the C-terminus, leading to mature hormone. The mature form of Gonadoliberin-1 is also cleaved and degraded by ACE.

It localises to the secreted. Functionally, stimulates the secretion of gonadotropins; it stimulates the secretion of both luteinizing and follicle-stimulating hormones. The sequence is that of Progonadoliberin-1 (GNRH1) from Cavia porcellus (Guinea pig).